Consider the following 1377-residue polypeptide: DNA-directed RNA polymerase subunit beta (1377 aa).

The protein belongs to the RNA polymerase beta chain family. As to quaternary structure, the RNAP catalytic core consists of 2 alpha, 1 beta, 1 beta' and 1 omega subunit. When a sigma factor is associated with the core the holoenzyme is formed, which can initiate transcription.

It carries out the reaction RNA(n) + a ribonucleoside 5'-triphosphate = RNA(n+1) + diphosphate. DNA-dependent RNA polymerase catalyzes the transcription of DNA into RNA using the four ribonucleoside triphosphates as substrates. The chain is DNA-directed RNA polymerase subunit beta from Aromatoleum aromaticum (strain DSM 19018 / LMG 30748 / EbN1) (Azoarcus sp. (strain EbN1)).